The sequence spans 246 residues: tRNA pseudouridine synthase A (246 aa).

The active-site Nucleophile is Asp-53. Residue Tyr-111 coordinates substrate.

This sequence belongs to the tRNA pseudouridine synthase TruA family. Homodimer.

The enzyme catalyses uridine(38/39/40) in tRNA = pseudouridine(38/39/40) in tRNA. Formation of pseudouridine at positions 38, 39 and 40 in the anticodon stem and loop of transfer RNAs. This chain is tRNA pseudouridine synthase A, found in Lysinibacillus sphaericus (strain C3-41).